A 76-amino-acid polypeptide reads, in one-letter code: UPF0248 protein MmarC6_0667 (76 aa).

It belongs to the UPF0248 family.

The polypeptide is UPF0248 protein MmarC6_0667 (Methanococcus maripaludis (strain C6 / ATCC BAA-1332)).